The sequence spans 511 residues: GMP synthase [glutamine-hydrolyzing] (511 aa).

The Glutamine amidotransferase type-1 domain occupies 5–195 (LILVLDFGGQ…LYKICGCSGD (191 aa)). Cys-82 serves as the catalytic Nucleophile. Catalysis depends on residues His-169 and Glu-171. Residues 196 to 386 (WKMASFIEHS…LGIPEDIVMR (191 aa)) form the GMPS ATP-PPase domain. 223–229 (SGGVDSS) contributes to the ATP binding site.

Homodimer.

The enzyme catalyses XMP + L-glutamine + ATP + H2O = GMP + L-glutamate + AMP + diphosphate + 2 H(+). Its pathway is purine metabolism; GMP biosynthesis; GMP from XMP (L-Gln route): step 1/1. Catalyzes the synthesis of GMP from XMP. This chain is GMP synthase [glutamine-hydrolyzing], found in Acetivibrio thermocellus (strain ATCC 27405 / DSM 1237 / JCM 9322 / NBRC 103400 / NCIMB 10682 / NRRL B-4536 / VPI 7372) (Clostridium thermocellum).